A 402-amino-acid chain; its full sequence is MNLKPRNNSWKQNLYIVWFGCFLTGAGFSLIMPFLPLYVEELGIKDHESLNLWTGVAFSITFLFSAIAAPFWGKLSDRKGRKLMLLRSALGMAIVMVLIGFAQNIWQLLILRALLGVLGGFVPNANALIATQVPVKKSGWALGTLSTGAVSGALIGPLIGGILADLYGLRPVFFITAAVLFICFIVTLFFVSENFTPVSKKDALSTQQVFSSLKNKRLVICLFFTTMIIQVATGSVTPILTLYIRDLAGSISNLAFISGVIASVPGIAALISAPRFGKLGDRIGPDKVLIFTLGLSIFMLIPMALVSNYWELGALRFLLGAVNAAMLPAVQTLILYNITPAIAGRIFSYNQALRDVGNVTGPLMGAFVAANYGFRAVFYFTAAVVFFNLIYSWISFRTPQRK.

Helical transmembrane passes span 14-34, 52-72, 90-110, 113-133, 149-169, 171-191, 219-239, 254-274, 288-308, 318-338, and 376-396; these read LYIVWFGCFLTGAGFSLIMPF, LWTGVAFSITFLFSAIAAPFW, LGMAIVMVLIGFAQNIWQLLI, ALLGVLGGFVPNANALIATQV, AVSGALIGPLIGGILADLYGL, PVFFITAAVLFICFIVTLFFV, VICLFFTTMIIQVATGSVTPI, LAFISGVIASVPGIAALISAP, VLIFTLGLSIFMLIPMALVSN, LLGAVNAAMLPAVQTLILYNI, and AVFYFTAAVVFFNLIYSWISF.

It belongs to the major facilitator superfamily. DHA1 family. MdtG (TC 2.A.1.2.20) subfamily.

The protein resides in the cell inner membrane. The polypeptide is Multidrug resistance protein MdtG (Proteus mirabilis (strain HI4320)).